Here is a 98-residue protein sequence, read N- to C-terminus: NADH-ubiquinone oxidoreductase chain 4L (98 aa).

Helical transmembrane passes span 2-22 (PSISININLAFATALLGMLMF), 29-49 (SLLCLEGMMLSMFILSTLTIL), and 61-81 (ILLLVFAACEAAIGLALLVMV).

It belongs to the complex I subunit 4L family. As to quaternary structure, core subunit of respiratory chain NADH dehydrogenase (Complex I) which is composed of 45 different subunits.

It localises to the mitochondrion inner membrane. The catalysed reaction is a ubiquinone + NADH + 5 H(+)(in) = a ubiquinol + NAD(+) + 4 H(+)(out). Functionally, core subunit of the mitochondrial membrane respiratory chain NADH dehydrogenase (Complex I) which catalyzes electron transfer from NADH through the respiratory chain, using ubiquinone as an electron acceptor. Part of the enzyme membrane arm which is embedded in the lipid bilayer and involved in proton translocation. This Microcebus simmonsi (Simmons's mouse lemur) protein is NADH-ubiquinone oxidoreductase chain 4L (MT-ND4L).